The chain runs to 447 residues: Tubulin beta-1 chain (447 aa).

8 residues coordinate GTP: Gln11, Glu69, Ser138, Gly142, Thr143, Gly144, Asn204, and Asn226. Glu69 contributes to the Mg(2+) binding site. The tract at residues 428 to 447 (ATADEDAEFDEEQEQEIEDN) is disordered. Residues 429–447 (TADEDAEFDEEQEQEIEDN) show a composition bias toward acidic residues.

The protein belongs to the tubulin family. As to quaternary structure, dimer of alpha and beta chains. A typical microtubule is a hollow water-filled tube with an outer diameter of 25 nm and an inner diameter of 15 nM. Alpha-beta heterodimers associate head-to-tail to form protofilaments running lengthwise along the microtubule wall with the beta-tubulin subunit facing the microtubule plus end conferring a structural polarity. Microtubules usually have 13 protofilaments but different protofilament numbers can be found in some organisms and specialized cells. Mg(2+) is required as a cofactor.

It localises to the cytoplasm. The protein localises to the cytoskeleton. Tubulin is the major constituent of microtubules, a cylinder consisting of laterally associated linear protofilaments composed of alpha- and beta-tubulin heterodimers. Microtubules grow by the addition of GTP-tubulin dimers to the microtubule end, where a stabilizing cap forms. Below the cap, tubulin dimers are in GDP-bound state, owing to GTPase activity of alpha-tubulin. The chain is Tubulin beta-1 chain from Manduca sexta (Tobacco hawkmoth).